A 491-amino-acid polypeptide reads, in one-letter code: Probable cytosol aminopeptidase (491 aa).

The Mn(2+) site is built by Lys-261 and Asp-266. The active site involves Lys-273. 3 residues coordinate Mn(2+): Asp-285, Asp-344, and Glu-346. Residue Arg-348 is part of the active site.

This sequence belongs to the peptidase M17 family. Mn(2+) serves as cofactor.

It is found in the cytoplasm. The enzyme catalyses Release of an N-terminal amino acid, Xaa-|-Yaa-, in which Xaa is preferably Leu, but may be other amino acids including Pro although not Arg or Lys, and Yaa may be Pro. Amino acid amides and methyl esters are also readily hydrolyzed, but rates on arylamides are exceedingly low.. It carries out the reaction Release of an N-terminal amino acid, preferentially leucine, but not glutamic or aspartic acids.. In terms of biological role, presumably involved in the processing and regular turnover of intracellular proteins. Catalyzes the removal of unsubstituted N-terminal amino acids from various peptides. The sequence is that of Probable cytosol aminopeptidase from Picosynechococcus sp. (strain ATCC 27264 / PCC 7002 / PR-6) (Agmenellum quadruplicatum).